Consider the following 912-residue polypeptide: Type II beta methyltransferase M.BslI (912 aa).

This sequence belongs to the N(4)/N(6)-methyltransferase family. N(4) subfamily.

It catalyses the reaction a 2'-deoxycytidine in DNA + S-adenosyl-L-methionine = an N(4)-methyl-2'-deoxycytidine in DNA + S-adenosyl-L-homocysteine + H(+). A beta subtype methylase. Recognizes the double-stranded sequence 5'-CCN(7)GG-3', methylates C-2 on both strands, and protects the DNA from cleavage by the BslI endonuclease. The protein is Type II beta methyltransferase M.BslI (bslIM) of Bacillus sp. (strain NEB-606).